The primary structure comprises 201 residues: Guanylyl cyclase-activating protein 1 (201 aa).

Residue Gly2 is the site of N-myristoyl glycine attachment. Asn3 is subject to Deamidated asparagine. EF-hand domains follow at residues 31–49 (SGQL…KNLS), 51–86 (SASQ…VLKG), 87–122 (KVEQ…IRAI), and 131–166 (TAEE…DQML). Ca(2+) contacts are provided by Asp64, Asn66, Asp68, Tyr70, Glu75, Asp100, Asp102, Asn104, Cys106, Glu111, Asp144, Asn146, Asp148, Glu150, and Glu155.

In terms of assembly, homodimer. In the retina, it is expressed in rod and cone photoreceptors.

Its subcellular location is the membrane. The protein resides in the photoreceptor inner segment. The protein localises to the cell projection. It is found in the cilium. It localises to the photoreceptor outer segment. In terms of biological role, stimulates retinal guanylyl cyclase when free calcium ions concentration is low and inhibits guanylyl cyclase when free calcium ions concentration is elevated. This Ca(2+)-sensitive regulation of retinal guanylyl cyclase is a key event in recovery of the dark state of rod photoreceptors following light exposure. May be involved in cone photoreceptor light response and recovery of response in bright light. This Homo sapiens (Human) protein is Guanylyl cyclase-activating protein 1 (GUCA1A).